A 526-amino-acid polypeptide reads, in one-letter code: Glucose-6-phosphate isomerase (526 aa).

Glu320 functions as the Proton donor in the catalytic mechanism. Catalysis depends on residues His349 and Lys453.

It belongs to the GPI family.

It localises to the cytoplasm. It catalyses the reaction alpha-D-glucose 6-phosphate = beta-D-fructose 6-phosphate. It participates in carbohydrate biosynthesis; gluconeogenesis. Its pathway is carbohydrate degradation; glycolysis; D-glyceraldehyde 3-phosphate and glycerone phosphate from D-glucose: step 2/4. In terms of biological role, catalyzes the reversible isomerization of glucose-6-phosphate to fructose-6-phosphate. The sequence is that of Glucose-6-phosphate isomerase from Gloeothece citriformis (strain PCC 7424) (Cyanothece sp. (strain PCC 7424)).